Reading from the N-terminus, the 96-residue chain is Salivary protein FS50 (96 aa).

Residues 1 to 19 form the signal peptide; it reads MKWILVLALVCLAVEYSYS. Disulfide bonds link Cys26–Cys71, Cys50–Cys78, Cys63–Cys91, and Cys67–Cys93.

It localises to the secreted. Its function is as follows. Salivary protein that inhibits host voltage-gated sodium channel Nav1.5/SCN5A. This is Salivary protein FS50 from Xenopsylla cheopis (Oriental rat flea).